The sequence spans 425 residues: MATAEVLNIGKKLYEGKTKEVYELLDSPGKVLLQSKDQITAGNAARKNHLEGKAAISNKITSCIFQLLQEAGIKTAFTRKCGETAFIAPQCEMIPIEWVCRRIATGSFLKRNPGVKEGYKFYPPKVELFFKDDANNDPQWSEEQLIAAKFCFAGLLIGQTEVDIMSHATQAIFEILEKSWLPQNCTLVDMKIEFGVDVTTKEIVLADVIDNDSWRLWPSGDRSQQKDKQSYRDLKEVTPEGLQMVKKNFEWVAERVELLLKSESQCRVVVLMGSTSDLGHCEKIKKACGNFGIPCELRVTSAHKGPDETLRIKAEYEGDGIPTVFVAVAGRSNGLGPVMSGNTAYPVISCPPLTPDWGVQDVWSSLRLPSGLGCSTVLSPEGSAQFAAQIFGLSNHLVWSKLRASILNTWISLKQADKKIRECNL.

N-acetylalanine is present on A2. Positions 2–260 (ATAEVLNIGK…WVAERVELLL (259 aa)) are SAICAR synthetase domain. A Phosphotyrosine modification is found at Y22. Position 27 is a phosphoserine (S27). The residue at position 36 (K36) is an N6-acetyllysine. S107 is subject to Phosphoserine. T238 is modified (phosphothreonine). K247 carries the post-translational modification N6-acetyllysine. The tract at residues 261–266 (KSESQC) is linker. Positions 267–425 (RVVVLMGSTS…ADKKIRECNL (159 aa)) are AIR carboxylase domain. S274 carries the post-translational modification Phosphoserine. S332 is a CO2 binding site.

This sequence in the N-terminal section; belongs to the SAICAR synthetase family. In the C-terminal section; belongs to the AIR carboxylase family. Class II subfamily. As to quaternary structure, homooctamer.

It carries out the reaction 5-amino-1-(5-phospho-D-ribosyl)imidazole-4-carboxylate + L-aspartate + ATP = (2S)-2-[5-amino-1-(5-phospho-beta-D-ribosyl)imidazole-4-carboxamido]succinate + ADP + phosphate + 2 H(+). The catalysed reaction is 5-amino-1-(5-phospho-D-ribosyl)imidazole-4-carboxylate + H(+) = 5-amino-1-(5-phospho-beta-D-ribosyl)imidazole + CO2. Its pathway is purine metabolism; IMP biosynthesis via de novo pathway; 5-amino-1-(5-phospho-D-ribosyl)imidazole-4-carboxamide from 5-amino-1-(5-phospho-D-ribosyl)imidazole-4-carboxylate: step 1/2. It participates in purine metabolism; IMP biosynthesis via de novo pathway; 5-amino-1-(5-phospho-D-ribosyl)imidazole-4-carboxylate from 5-amino-1-(5-phospho-D-ribosyl)imidazole (carboxylase route): step 1/1. Its function is as follows. Bifunctional phosphoribosylaminoimidazole carboxylase and phosphoribosylaminoimidazole succinocarboxamide synthetase catalyzing two reactions of the de novo purine biosynthetic pathway. This chain is Bifunctional phosphoribosylaminoimidazole carboxylase/phosphoribosylaminoimidazole succinocarboxamide synthetase, found in Homo sapiens (Human).